The following is a 332-amino-acid chain: Fructose-1,6-bisphosphatase class 1 (332 aa).

Mg(2+) contacts are provided by Glu89, Asp110, Leu112, and Asp113. Substrate contacts are provided by residues 113–116 (DGSS), Asn206, Tyr239, 257–259 (YLY), and Lys269. Mg(2+) is bound at residue Glu275.

It belongs to the FBPase class 1 family. Homotetramer. Requires Mg(2+) as cofactor.

Its subcellular location is the cytoplasm. The catalysed reaction is beta-D-fructose 1,6-bisphosphate + H2O = beta-D-fructose 6-phosphate + phosphate. The protein operates within carbohydrate biosynthesis; gluconeogenesis. The sequence is that of Fructose-1,6-bisphosphatase class 1 from Salmonella gallinarum (strain 287/91 / NCTC 13346).